Here is a 342-residue protein sequence, read N- to C-terminus: Heat-inducible transcription repressor HrcA (342 aa).

The protein belongs to the HrcA family.

In terms of biological role, negative regulator of class I heat shock genes (grpE-dnaK-dnaJ and groELS operons). Prevents heat-shock induction of these operons. This is Heat-inducible transcription repressor HrcA from Geobacter sulfurreducens (strain ATCC 51573 / DSM 12127 / PCA).